Consider the following 232-residue polypeptide: MAKVSKRYKALAEKVEERKYSLAEACTTVRDLKSAKFDESVEIALNLNVDPRHADQMIRGAVVLPNGTGKTVRVAVFAKGVKLDEAKAAGADVVGNDDLAEAIQAGNINFDVLIATPDCMGIVGKVGRILGPKGLMPNPKTGTVTMDVTKAVNDAKGGQVTYRVDKKGNMQAAVGKVSFSAEAIKENVEAFVAAINKAKPSTAKGRYITNAAISLTMSPSIILDNMELMEIR.

It belongs to the universal ribosomal protein uL1 family. Part of the 50S ribosomal subunit.

Its function is as follows. Binds directly to 23S rRNA. The L1 stalk is quite mobile in the ribosome, and is involved in E site tRNA release. Protein L1 is also a translational repressor protein, it controls the translation of the L11 operon by binding to its mRNA. In Aliarcobacter butzleri (strain RM4018) (Arcobacter butzleri), this protein is Large ribosomal subunit protein uL1.